The chain runs to 476 residues: ATP synthase subunit beta 2 (476 aa).

160-167 is a binding site for ATP; sequence GGAGVGKT.

It belongs to the ATPase alpha/beta chains family. F-type ATPases have 2 components, CF(1) - the catalytic core - and CF(0) - the membrane proton channel. CF(1) has five subunits: alpha(3), beta(3), gamma(1), delta(1), epsilon(1). CF(0) has four main subunits: a(1), b(1), b'(1) and c(9-12).

It is found in the cell inner membrane. It catalyses the reaction ATP + H2O + 4 H(+)(in) = ADP + phosphate + 5 H(+)(out). Its function is as follows. Produces ATP from ADP in the presence of a proton gradient across the membrane. The catalytic sites are hosted primarily by the beta subunits. This chain is ATP synthase subunit beta 2, found in Bradyrhizobium sp. (strain BTAi1 / ATCC BAA-1182).